The following is an 83-amino-acid chain: Late seed maturation protein P8B6 (83 aa).

Basic and acidic residues-rich tracts occupy residues 1 to 18 (MASQQEKKQLDERAKKGE) and 37 to 51 (AEGRSRGGNTRKEQL). The segment at 1–83 (MASQQEKKQL…DAEDEPSTRT (83 aa)) is disordered. Residues 73–83 (EDAEDEPSTRT) show a composition bias toward acidic residues.

Belongs to the small hydrophilic plant seed protein family.

Its subcellular location is the cytoplasm. Its function is as follows. This protein may play a role in equipping the seed for survival, maintaining a minimal level of hydration in the dry organism and preventing the denaturation of cytoplasmic components, or may play a role during imbibition by controlling water uptake. The sequence is that of Late seed maturation protein P8B6 from Raphanus sativus (Radish).